The sequence spans 204 residues: CASP-like protein 3A1 (204 aa).

At 1–39 (MGSIGNGRNGSEVGIQIPAMGNKEVLERPAIPRWPRLGV) the chain is on the cytoplasmic side. The chain crosses the membrane as a helical span at residues 40-60 (VMVATRAVALVMAVLSMALMI). Over 61–88 (SAKQRGSLKIFGIEIPLYANWSFSDSLE) the chain is Extracellular. Asn80 is a glycosylation site (N-linked (GlcNAc...) asparagine). The chain crosses the membrane as a helical span at residues 89 to 109 (YLVGMSAVSAAYCLAQLLLTA). Residues 110–124 (HKAVKNAPVVQSRNY) are Cytoplasmic-facing. A helical transmembrane segment spans residues 125–145 (AWLLFTGDQIFAYAMMSAGSA). The Extracellular portion of the chain corresponds to 146-179 (AAAVANLNRTGIRHTALPNFCKPLPRFCDLSAAS). A glycan (N-linked (GlcNAc...) asparagine) is linked at Asn153. The helical transmembrane segment at 180–200 (IACAFLSCIFLAASAVIDVIW) threads the bilayer. Over 201 to 204 (LSNM) the chain is Cytoplasmic.

This sequence belongs to the Casparian strip membrane proteins (CASP) family. As to quaternary structure, homodimer and heterodimers.

The protein resides in the cell membrane. The chain is CASP-like protein 3A1 from Oryza sativa subsp. indica (Rice).